Reading from the N-terminus, the 1260-residue chain is uncharacterized protein (1260 aa).

The protein belongs to the oxoprolinase family.

This is an uncharacterized protein from Schizosaccharomyces pombe (strain 972 / ATCC 24843) (Fission yeast).